A 258-amino-acid polypeptide reads, in one-letter code: Global transcriptional regulator CodY (258 aa).

The GAF domain stretch occupies residues 1–156; sequence MSSLLEKTRQ…SATIIGLEIL (156 aa). The segment at residues 204–223 is a DNA-binding region (H-T-H motif); it reads ASKIADKVGITRSVIVNALR.

Belongs to the CodY family.

The protein localises to the cytoplasm. Its function is as follows. DNA-binding global transcriptional regulator which is involved in the adaptive response to starvation and acts by directly or indirectly controlling the expression of numerous genes in response to nutrient availability. During rapid exponential growth, CodY is highly active and represses genes whose products allow adaptation to nutrient depletion. The protein is Global transcriptional regulator CodY of Clostridium tetani (strain Massachusetts / E88).